The primary structure comprises 291 residues: MLRREARLRREYLYRKAREEAQRSAQERKERLRRALEENRLIPTELRREALALQGSLEFDDAGGEGVTSHVDDEYRWAGVEDPKVMITTSRDPSSRLKMFAKELKLVFPGAQRMNRGRHEVGALVRACKANGVTDLLVVHEHRGTPVGLIVSHLPFGPTAYFTLCNVVMRHDIPDLGTMSEAKPHLITHGFSSRLGKRVSDILRYLFPVPKDDSHRVITFANQDDYISFRHHVYKKTDHRNVELTEVGPRFELKLYMIRLGTLEQEATADVEWRWHPYTNTARKRVFLSAE.

The 182-residue stretch at 83–264 (PKVMITTSRD…LYMIRLGTLE (182 aa)) folds into the Brix domain.

Part of the small subunit (SSU) processome, composed of more than 70 proteins and the RNA chaperone small nucleolar RNA (snoRNA) U3. Component of a heterotrimeric complex containing IMP3, IMP4 and MPHOSPH10. Interacts with MPHOSPH10.

It is found in the nucleus. It localises to the nucleolus. Functionally, component of the 60-80S U3 small nucleolar ribonucleoprotein (U3 snoRNP). Required for the early cleavages during pre-18S ribosomal RNA processing. Part of the small subunit (SSU) processome, first precursor of the small eukaryotic ribosomal subunit. During the assembly of the SSU processome in the nucleolus, many ribosome biogenesis factors, an RNA chaperone and ribosomal proteins associate with the nascent pre-rRNA and work in concert to generate RNA folding, modifications, rearrangements and cleavage as well as targeted degradation of pre-ribosomal RNA by the RNA exosome. The polypeptide is U3 small nucleolar ribonucleoprotein protein IMP4 (IMP4) (Pongo abelii (Sumatran orangutan)).